The primary structure comprises 590 residues: Probable lysosomal cobalamin transporter (590 aa).

The next 10 helical transmembrane spans lie at Leu8–Ile28, Ile46–Val66, Ala94–Phe114, Thr145–Gly165, Ala190–Thr210, Leu314–Thr334, Cys348–His367, Tyr376–Thr396, Ile421–Val441, and Phe508–Phe528. The tract at residues Trp567 to Glu590 is disordered.

It belongs to the LIMR family. LMBRD1 subfamily.

It localises to the lysosome membrane. Its function is as follows. Probable lysosomal cobalamin transporter. Required to export cobalamin from lysosomes allowing its conversion to cofactors. In Ajellomyces capsulatus (strain NAm1 / WU24) (Darling's disease fungus), this protein is Probable lysosomal cobalamin transporter.